A 185-amino-acid polypeptide reads, in one-letter code: Threonylcarbamoyl-AMP synthase (185 aa).

One can recognise a YrdC-like domain in the interval 1 to 185; the sequence is MDNFEQVLNA…AKTSQILRQG (185 aa). The segment at 163–185 is disordered; sequence ETSGRDKPSEIRDAKTSQILRQG. A compositionally biased stretch (basic and acidic residues) spans 164–177; that stretch reads TSGRDKPSEIRDAK.

This sequence belongs to the SUA5 family. TsaC subfamily.

It localises to the cytoplasm. The catalysed reaction is L-threonine + hydrogencarbonate + ATP = L-threonylcarbamoyladenylate + diphosphate + H2O. In terms of biological role, required for the formation of a threonylcarbamoyl group on adenosine at position 37 (t(6)A37) in tRNAs that read codons beginning with adenine. Catalyzes the conversion of L-threonine, HCO(3)(-)/CO(2) and ATP to give threonylcarbamoyl-AMP (TC-AMP) as the acyladenylate intermediate, with the release of diphosphate. The protein is Threonylcarbamoyl-AMP synthase of Vibrio parahaemolyticus serotype O3:K6 (strain RIMD 2210633).